The chain runs to 75 residues: UPF0270 protein PputGB1_1339 (75 aa).

The protein belongs to the UPF0270 family.

In Pseudomonas putida (strain GB-1), this protein is UPF0270 protein PputGB1_1339.